The sequence spans 792 residues: Probable exo-1,4-beta-xylosidase xlnD (792 aa).

The signal sequence occupies residues 1 to 20; it reads MSVAKSIAAVLVALLPGALA. Residues Asn23, Asn87, Asn118, Asn142, and Asn246 are each glycosylated (N-linked (GlcNAc...) asparagine). Residue Asp310 is part of the active site. Asn326, Asn385, Asn404, Asn440, Asn477, Asn518, Asn679, and Asn701 each carry an N-linked (GlcNAc...) asparagine glycan.

Belongs to the glycosyl hydrolase 3 family.

It is found in the secreted. It carries out the reaction Hydrolysis of (1-&gt;4)-beta-D-xylans, to remove successive D-xylose residues from the non-reducing termini.. It functions in the pathway glycan degradation; xylan degradation. In terms of biological role, xylan 1,4-beta-xylosidase involved in the hydrolysis of xylan, a major structural heterogeneous polysaccharide found in plant biomass representing the second most abundant polysaccharide in the biosphere, after cellulose. This chain is Probable exo-1,4-beta-xylosidase xlnD (xlnD), found in Aspergillus fumigatus (strain CBS 144.89 / FGSC A1163 / CEA10) (Neosartorya fumigata).